The chain runs to 2407 residues: Daf-12-interacting protein 1 (2407 aa).

Positions 90-112 (QNSSMASMSSTPSSGQSSSPRNA) are enriched in low complexity. The disordered stretch occupies residues 90-152 (QNSSMASMSS…PHLSVQSQQR (63 aa)). An RRM domain is found at 277–335 (CSVHVPHLDRHSPDHYRRRFESYGQVIDVDMVKSNDNKAFAVVQFTNIDDAQKALQDTN). Disordered stretches follow at residues 439–632 (EVAA…LELD), 737–767 (ATDS…TNRL), 785–849 (LCIG…GRPA), 874–896 (PTHD…ETMV), 921–986 (LIAA…PSNA), 993–1012 (RSQS…TPVV), 1025–1844 (SNQP…EDSE), 1858–1918 (IAQE…VNNH), 1932–1976 (LQPA…QQSD), 2077–2103 (EENE…LAAA), and 2172–2200 (SIQR…VNQN). Residues 443–456 (RSSSPTSKSENDQG) are compositionally biased toward polar residues. Over residues 512 to 529 (EDSDEQNDVDEEDDEDVV) the composition is skewed to acidic residues. 3 stretches are compositionally biased toward basic and acidic residues: residues 530-541 (SEEKRHEPEEGK), 548-564 (GHRD…DSSE), and 573-586 (SHHE…KDSE). The span at 587 to 603 (AYQSRSFSPLNYQSQSP) shows a compositional bias: polar residues. Low complexity predominate over residues 618–627 (SPTTSSASSS). 2 stretches are compositionally biased toward polar residues: residues 791–826 (TPST…TPRS) and 837–849 (SRHN…GRPA). Polar residues predominate over residues 924–946 (ATSTGTHSVSSSAHSTPRHSISG). Residues 966-978 (SRPEKVQIRHDTI) show a composition bias toward basic and acidic residues. A compositionally biased stretch (polar residues) spans 1043–1052 (SALQNIQNHQ). A compositionally biased stretch (low complexity) spans 1053-1070 (PPHSNANSTPSTPSTSTH). The segment covering 1086–1153 (KEKEEREREA…KVRKKAEKEK (68 aa)) has biased composition (basic and acidic residues). Residues 1165–1177 (SDESDSDSNDELD) show a composition bias toward acidic residues. Basic and acidic residues-rich tracts occupy residues 1178–1195 (LDVR…KDHQ), 1218–1227 (RAHDSFEKMQ), 1279–1293 (ADQR…EKGE), 1304–1320 (NDAG…DREN), 1335–1355 (QGER…DAAA), and 1376–1398 (RRSS…PHED). Low complexity-rich tracts occupy residues 1456-1471 (PKHL…TKRS) and 1488-1498 (TTSSTSTATTS). Positions 1534 to 1547 (SMNSAADSPMSTTG) are enriched in polar residues. Low complexity predominate over residues 1570 to 1595 (SSSGQHDSSSGSSSDSSSSDGSTSSD). Basic and acidic residues-rich tracts occupy residues 1679–1691 (SEEH…HGDS) and 1703–1726 (EHQE…HEEQ). Residues 1749–1770 (TQAQEKSAHTLISDQETDQAVQ) show a composition bias toward polar residues. Basic and acidic residues predominate over residues 1792-1805 (NEKEVSGKDPHNIK). A compositionally biased stretch (polar residues) spans 1809-1826 (PLNNGHTDLLFSPSSSAH). 2 stretches are compositionally biased toward basic and acidic residues: residues 1827 to 1836 (ASEKQSTKSE) and 1873 to 1892 (EEVK…KMEE). Composition is skewed to polar residues over residues 1895-1911 (EQTP…SQDT) and 1932-1942 (LQPASQHQVAQ). Positions 1962–1975 (SQQSQPSPMSSQQS) are enriched in low complexity. The stretch at 2049-2110 (NQMMQAKMKQ…AAATAAATMA (62 aa)) forms a coiled coil. Residues 2077 to 2099 (EENERKVEEDRREKQRKEEERQR) are compositionally biased toward basic and acidic residues. Residues 2176–2186 (PSSTASTSSNP) show a composition bias toward low complexity. The 171-residue stretch at 2213–2383 (QRWFYKHFPM…TRYLLIVFTN (171 aa)) folds into the SPOC domain.

As to quaternary structure, isoform d interacts with daf-12. In terms of tissue distribution, isoform d is widely expressed: detected in the hypodermis, seam cells, intestine, somatic gonad, neurons, vulval precursors, body wall muscle and pharynx.

Its subcellular location is the nucleus. Its function is as follows. Probable transcriptional corepressor which modulates activity of the nuclear hormone receptor daf-12 to regulate the dauer diapause. This is Daf-12-interacting protein 1 from Caenorhabditis elegans.